The primary structure comprises 171 residues: Co-chaperone protein HscB homolog (171 aa).

The 68-residue stretch at 2–69 folds into the J domain; that stretch reads NHFELFDLPV…DSRAAYLLSL (68 aa).

This sequence belongs to the HscB family. In terms of assembly, interacts with HscA and stimulates its ATPase activity.

Co-chaperone involved in the maturation of iron-sulfur cluster-containing proteins. Seems to help targeting proteins to be folded toward HscA. This chain is Co-chaperone protein HscB homolog, found in Acinetobacter baylyi (strain ATCC 33305 / BD413 / ADP1).